Consider the following 768-residue polypeptide: Dual specificity calcium/calmodulin-dependent 3',5'-cyclic nucleotide phosphodiesterase 1C (768 aa).

The residue at position 1 (Met1) is an N-acetylmethionine. Positions 183 to 206 (EKPRFKSIVHAVQAGIFVERMYRR) are calmodulin-binding. The PDEase domain occupies 211–588 (VGLSYPPAVI…ERWRAKVPKE (378 aa)). His288 (proton donor) is an active-site residue. Zn(2+) is bound by residues His292, His328, Asp329, and Asp436. Asp329 contributes to the Mg(2+) binding site. Disordered stretches follow at residues 513–557 (LIDE…INNS) and 584–719 (KVPK…PPLR). 2 stretches are compositionally biased toward polar residues: residues 516-536 (ETSQTGGTGQRRSSLNSINSS) and 543-557 (VKSSGSEGSAPINNS). A compositionally biased stretch (basic and acidic residues) spans 584–614 (KVPKEEKAKKEAEEKARLAAEEKQKEMEAKS). Residues 631 to 641 (ETKGQVNGTRT) are compositionally biased toward polar residues. 2 stretches are compositionally biased toward basic and acidic residues: residues 642 to 659 (SKGDNPRGKNSKGDKAGE) and 665 to 692 (DLKDGKNKADKKDHSNTGNESKKADGTK). A compositionally biased stretch (low complexity) spans 698-712 (SPAPSTSSTSRLTLP).

The protein belongs to the cyclic nucleotide phosphodiesterase family. PDE1 subfamily. In terms of assembly, homodimer. Zn(2+) serves as cofactor. Requires Mg(2+) as cofactor. As to expression, highly expressed in olfactory epithelium and at moderate levels, in cerebellum, as well as weakly in forebrain, testis, heart and lung. In the olfactory epithelium, expressed by sensory neurons, but not epithelial cells.

Its subcellular location is the lysosome. It catalyses the reaction a nucleoside 3',5'-cyclic phosphate + H2O = a nucleoside 5'-phosphate + H(+). It carries out the reaction 3',5'-cyclic GMP + H2O = GMP + H(+). The catalysed reaction is 3',5'-cyclic AMP + H2O = AMP + H(+). With respect to regulation, type I PDE are activated by the binding of calmodulin in the presence of Ca(2+). Calmodulin-dependent cyclic nucleotide phosphodiesterase with a dual specificity for the second messengers cAMP and cGMP, which are key regulators of many important physiological processes. Has a high affinity for both cAMP and cGMP. Modulates the amplitude and duration of the cAMP signal in sensory cilia in response to odorant stimulation, hence contributing to the generation of action potentials. Regulates smooth muscle cell proliferation. Regulates the stability of growth factor receptors, including PDGFRB. This Rattus norvegicus (Rat) protein is Dual specificity calcium/calmodulin-dependent 3',5'-cyclic nucleotide phosphodiesterase 1C.